We begin with the raw amino-acid sequence, 283 residues long: Elongation factor Ts (283 aa).

The involved in Mg(2+) ion dislocation from EF-Tu stretch occupies residues 80–83; it reads TDFV.

This sequence belongs to the EF-Ts family.

It is found in the cytoplasm. In terms of biological role, associates with the EF-Tu.GDP complex and induces the exchange of GDP to GTP. It remains bound to the aminoacyl-tRNA.EF-Tu.GTP complex up to the GTP hydrolysis stage on the ribosome. The polypeptide is Elongation factor Ts (Haemophilus influenzae (strain PittGG)).